The following is a 275-amino-acid chain: Large ribosomal subunit protein uL2 (275 aa).

A disordered region spans residues 227 to 261; that stretch reads PVDHPHGGGEAKSGQGNPHPVTPWGVPTKGYKTRK.

The protein belongs to the universal ribosomal protein uL2 family. Part of the 50S ribosomal subunit. Forms a bridge to the 30S subunit in the 70S ribosome.

In terms of biological role, one of the primary rRNA binding proteins. Required for association of the 30S and 50S subunits to form the 70S ribosome, for tRNA binding and peptide bond formation. It has been suggested to have peptidyltransferase activity; this is somewhat controversial. Makes several contacts with the 16S rRNA in the 70S ribosome. This Xylella fastidiosa (strain M23) protein is Large ribosomal subunit protein uL2.